A 111-amino-acid chain; its full sequence is Prothymosin alpha-A (111 aa).

A disordered region spans residues 1 to 111 (MSDTAVDASV…IKKQKTDEDD (111 aa)). Basic and acidic residues predominate over residues 9-42 (SVEKTTKDLKAKEKEVVEEAENGKDKPTNGKAEN). Acidic residues-rich tracts occupy residues 43–81 (EENGEPEVDNEGDEEDEVDEEDEEDEVEGEDDDDDDEVE) and 90–100 (EDDEDDDDDDV). Positions 101 to 111 (EIKKQKTDEDD) are enriched in basic and acidic residues.

This sequence belongs to the pro/parathymosin family.

It is found in the nucleus. The polypeptide is Prothymosin alpha-A (ptma-a) (Xenopus laevis (African clawed frog)).